The sequence spans 343 residues: Arginine-hydroxylase NDUFAF5, mitochondrial (343 aa).

The N-terminal 29 residues, 1–29, are a transit peptide targeting the mitochondrion; it reads MLRRVVLSRLYARLGGPAVSAGRGGRRGV. The tract at residues 18–40 is disordered; sequence AVSAGRGGRRGVASSVPPSGSTS.

Belongs to the methyltransferase superfamily. In terms of assembly, interacts with NDUFAF8, leading to stabilize NDUFAF5. Interacts with NDUFS7. Interacts with PYURF (via TRM112 domain); the interaction is direct and stabilizes NDUFAF5 protein.

It is found in the mitochondrion inner membrane. Arginine hydroxylase that mediates hydroxylation of 'Arg-111' of NDUFS7 and is involved in the assembly of mitochondrial NADH:ubiquinone oxidoreductase complex (complex I, MT-ND1) at early stages. May also have methyltransferase activity. This Rattus norvegicus (Rat) protein is Arginine-hydroxylase NDUFAF5, mitochondrial.